A 311-amino-acid chain; its full sequence is Pyrimidine-specific ribonucleoside hydrolase RihA (311 aa).

Residue H240 is part of the active site.

Belongs to the IUNH family. RihA subfamily.

Functionally, hydrolyzes cytidine or uridine to ribose and cytosine or uracil, respectively. This is Pyrimidine-specific ribonucleoside hydrolase RihA from Salmonella paratyphi A (strain ATCC 9150 / SARB42).